The following is a 212-amino-acid chain: Glycerol-3-phosphate acyltransferase (212 aa).

5 helical membrane-spanning segments follow: residues 3-23 (LILL…LWIG), 69-89 (LLPM…FFAI), 110-130 (AGIL…IFFF), 143-163 (VIAA…HFLL), and 165-185 (DYDF…IIRH).

This sequence belongs to the PlsY family. In terms of assembly, probably interacts with PlsX.

It localises to the cell membrane. The catalysed reaction is an acyl phosphate + sn-glycerol 3-phosphate = a 1-acyl-sn-glycero-3-phosphate + phosphate. Its pathway is lipid metabolism; phospholipid metabolism. In terms of biological role, catalyzes the transfer of an acyl group from acyl-phosphate (acyl-PO(4)) to glycerol-3-phosphate (G3P) to form lysophosphatidic acid (LPA). This enzyme utilizes acyl-phosphate as fatty acyl donor, but not acyl-CoA or acyl-ACP. The sequence is that of Glycerol-3-phosphate acyltransferase from Streptococcus mutans serotype c (strain ATCC 700610 / UA159).